A 1025-amino-acid polypeptide reads, in one-letter code: Exportin-T (1025 aa).

This sequence belongs to the exportin family.

The protein resides in the nucleus. The protein localises to the cytoplasm. Functionally, tRNA nucleus export receptor which facilitates tRNA translocation across the nuclear pore complex. Involved in pre-tRNA splicing, probably by affecting the interaction of pre-tRNA with splicing endonuclease. The polypeptide is Exportin-T (LOS1) (Yarrowia lipolytica (strain CLIB 122 / E 150) (Yeast)).